The chain runs to 131 residues: EFKEAFSLFDKDGDGTITTKELGTVMRSLGQNPTEAELQDMINEVDADGNGTIDFPEFLTMMARKMKDTDSEEEIREAFRVFDKDSNGYISAAELRHVMTNLGEKLTDEEVDEMIREADIDGDGQVNYEEF.

EF-hand domains lie at 1-32 (EFKE…LGQN), 33-68 (PTEA…KMKD), 70-105 (DSEE…LGEK), and 106-131 (LTDE…YEEF). Ca(2+) is bound by residues Asp-10, Asp-12, Asp-14, Thr-16, Glu-21, Asp-46, Asp-48, Asn-50, Thr-52, Glu-57, Asp-83, Asp-85, Asn-87, Tyr-89, Glu-94, Asp-119, Asp-121, Asp-123, Gln-125, and Glu-130.

Belongs to the calmodulin family.

The protein is Neo-calmodulin of Gallus gallus (Chicken).